We begin with the raw amino-acid sequence, 212 residues long: Thymidylate kinase (212 aa).

10 to 17 lines the ATP pocket; sequence GIDGCGKT.

Belongs to the thymidylate kinase family.

The enzyme catalyses dTMP + ATP = dTDP + ADP. In terms of biological role, phosphorylation of dTMP to form dTDP in both de novo and salvage pathways of dTTP synthesis. The chain is Thymidylate kinase from Prochlorococcus marinus (strain AS9601).